A 349-amino-acid polypeptide reads, in one-letter code: tRNA-specific 2-thiouridylase MnmA (349 aa).

ATP-binding positions include 6–13 (LLSGGVDS) and M32. Residue C103 is the Nucleophile of the active site. Cysteines 103 and 195 form a disulfide. G127 serves as a coordination point for ATP. Positions 145 to 147 (KDQ) are interaction with tRNA. C195 acts as the Cysteine persulfide intermediate in catalysis.

This sequence belongs to the MnmA/TRMU family.

It localises to the cytoplasm. It catalyses the reaction S-sulfanyl-L-cysteinyl-[protein] + uridine(34) in tRNA + AH2 + ATP = 2-thiouridine(34) in tRNA + L-cysteinyl-[protein] + A + AMP + diphosphate + H(+). In terms of biological role, catalyzes the 2-thiolation of uridine at the wobble position (U34) of tRNA, leading to the formation of s(2)U34. The protein is tRNA-specific 2-thiouridylase MnmA of Pseudothermotoga lettingae (strain ATCC BAA-301 / DSM 14385 / NBRC 107922 / TMO) (Thermotoga lettingae).